Reading from the N-terminus, the 727-residue chain is MSVLPDRQVINQIISGHYADPFSVLGMHQTERGLQVCALLPDAQEVWLIDTKTGRRVAQLDCEDPRGFFAVQLTRRKNPFRYQFAVTWQESTQIIEDPYRFGTLLQDIDTWLLAEGTHLRPYERLGAHLMSLDEVPGVSFAVWAPNAQRVSVVGEFNFWDGRRHPMRLRRENGIWELFLPGVQAGQLYKFEIIDCHGQVRLKADPYAFKAQMRPETASLISPLPDVVENTPARQKANDLRSPISIYEVHLGSWRRHTDNNFWLSYGELADQLVEYVKYMGFTHVELLPINEHPFDGSWGYQPLGLYAPTRRFGTPQDFKDFVAKFHEAGINVILDWVPGHFPSDEHGLSTFDGTALYEYADPREGYHQDWNTLIYNYGRNEVRNYLAGNAFYWMERFGIDALRIDAVASMIYRDYSRAEGQWVPNYYGGRENLEAIAFLRYTNHTIGVERPGGVTMAEESTDFPGVTLPPDAGGLGFNYKWNMGWMHDTLNYMQCDPVHRKYHHNLMTFGMLYAYTENFILPISHDEVVHGKRSVLDRMPGDAWQKFANLRAYYGFMWAHPGKKLLFMGCEFAQGREWNFDTSLDWHLLDDENGWHKGVQRWVRDLNHCYQQYAPLYELDYQPAGFEWLVVDDHENSVFAFLRRDADGNELIVISNFTPVPRYNYRVGVPQSGHYREVLNSDSAFYRGSNMGNQGGIHSHPVSSHNHAHSLLLTLPPLSTIYLTRGG.

Asp405 (nucleophile) is an active-site residue. Glu458 functions as the Proton donor in the catalytic mechanism.

Belongs to the glycosyl hydrolase 13 family. GlgB subfamily. As to quaternary structure, monomer.

The enzyme catalyses Transfers a segment of a (1-&gt;4)-alpha-D-glucan chain to a primary hydroxy group in a similar glucan chain.. Its pathway is glycan biosynthesis; glycogen biosynthesis. Functionally, catalyzes the formation of the alpha-1,6-glucosidic linkages in glycogen by scission of a 1,4-alpha-linked oligosaccharide from growing alpha-1,4-glucan chains and the subsequent attachment of the oligosaccharide to the alpha-1,6 position. The chain is 1,4-alpha-glucan branching enzyme GlgB from Yersinia enterocolitica serotype O:8 / biotype 1B (strain NCTC 13174 / 8081).